The chain runs to 477 residues: ETS translocation variant 1 (477 aa).

Ser94 is modified (phosphoserine). A disordered region spans residues Pro128–Ser178. Phosphoserine; by RPS6KA1 and RPS6KA5 occurs at positions 191 and 216. Residue Lys317 forms a Glycyl lysine isopeptide (Lys-Gly) (interchain with G-Cter in SUMO2) linkage. The ETS DNA-binding region spans Leu335–Val415.

Belongs to the ETS family. Sumoylated. In terms of processing, phosphorylated at Ser-191 and Ser-216 by RPS6KA1 and RPS6KA5; phosphorylation activates transcriptional activity.

It localises to the nucleus. In terms of biological role, transcriptional activator that binds to DNA sequences containing the consensus pentanucleotide 5'-CGGA[AT]-3'. Required for olfactory dopaminergic neuron differentiation; may directly activate expression of tyrosine hydroxylase (TH). This is ETS translocation variant 1 (ETV1) from Bos taurus (Bovine).